A 483-amino-acid polypeptide reads, in one-letter code: Argininosuccinate lyase (483 aa).

This sequence belongs to the lyase 1 family. Argininosuccinate lyase subfamily.

The protein localises to the cytoplasm. It catalyses the reaction 2-(N(omega)-L-arginino)succinate = fumarate + L-arginine. It participates in amino-acid biosynthesis; L-arginine biosynthesis; L-arginine from L-ornithine and carbamoyl phosphate: step 3/3. This is Argininosuccinate lyase from Archaeoglobus fulgidus (strain ATCC 49558 / DSM 4304 / JCM 9628 / NBRC 100126 / VC-16).